Consider the following 338-residue polypeptide: MSKLFSEYKLKDVTLKNRIVMSPMCMYSVENKDGIATDFHFAHYVSRAAGGTGLVILEATAVQEVGRISEFDLGLWNDEQVPALKHLVDGLHSHGAKAGIQLAHAGRKAVLPGEIVAPSAIAYDEKSAKPVELTKEAIKEVVADFKRAAYRAKEAGFDVIEIHAAHGYLIHQFLSPITNRREDNYGGPAGNRYKILSDIIKAVKEVWDGPIIVRVSATDYAHGGLQLEDYIPFAKWMKADGVELIDVSTGGLVNVAPPVFPGYQVPFADEIRRGAGIATGVLGLITRGEQAEEILCNERADLIIIGRELLRNPYFAKDAALSLGETIEGPKQYSRAWK.

Residue Ser22–Cys25 participates in FMN binding. Position 27 (Tyr27) interacts with substrate. The FMN site is built by Ala59 and Gln101. Position 163–166 (His163–His166) interacts with substrate. FMN is bound by residues Arg214 and Gly306–Arg307.

The protein belongs to the NADH:flavin oxidoreductase/NADH oxidase family. NamA subfamily. As to quaternary structure, homotetramer. Requires FMN as cofactor.

It catalyses the reaction A + NADPH + H(+) = AH2 + NADP(+). Its function is as follows. Catalyzes the reduction of the double bond of an array of alpha,beta-unsaturated aldehydes and ketones. It also reduces the nitro group of nitroester and nitroaromatic compounds. It could have a role in detoxification processes. The protein is NADPH dehydrogenase of Listeria welshimeri serovar 6b (strain ATCC 35897 / DSM 20650 / CCUG 15529 / CIP 8149 / NCTC 11857 / SLCC 5334 / V8).